A 480-amino-acid polypeptide reads, in one-letter code: Protein nucleotidyltransferase YdiU (480 aa).

ATP is bound by residues glycine 86, glycine 88, arginine 89, lysine 109, aspartate 121, glycine 122, arginine 172, and arginine 179. Aspartate 248 serves as the catalytic Proton acceptor. Mg(2+) is bound by residues asparagine 249 and aspartate 258. Aspartate 258 is a binding site for ATP.

This sequence belongs to the SELO family. It depends on Mg(2+) as a cofactor. Mn(2+) serves as cofactor.

The catalysed reaction is L-seryl-[protein] + ATP = 3-O-(5'-adenylyl)-L-seryl-[protein] + diphosphate. It carries out the reaction L-threonyl-[protein] + ATP = 3-O-(5'-adenylyl)-L-threonyl-[protein] + diphosphate. The enzyme catalyses L-tyrosyl-[protein] + ATP = O-(5'-adenylyl)-L-tyrosyl-[protein] + diphosphate. It catalyses the reaction L-histidyl-[protein] + UTP = N(tele)-(5'-uridylyl)-L-histidyl-[protein] + diphosphate. The catalysed reaction is L-seryl-[protein] + UTP = O-(5'-uridylyl)-L-seryl-[protein] + diphosphate. It carries out the reaction L-tyrosyl-[protein] + UTP = O-(5'-uridylyl)-L-tyrosyl-[protein] + diphosphate. Functionally, nucleotidyltransferase involved in the post-translational modification of proteins. It can catalyze the addition of adenosine monophosphate (AMP) or uridine monophosphate (UMP) to a protein, resulting in modifications known as AMPylation and UMPylation. In Salmonella choleraesuis (strain SC-B67), this protein is Protein nucleotidyltransferase YdiU.